Here is a 496-residue protein sequence, read N- to C-terminus: Probable malate:quinone oxidoreductase (496 aa).

The protein belongs to the MQO family. The cofactor is FAD.

It catalyses the reaction (S)-malate + a quinone = a quinol + oxaloacetate. It functions in the pathway carbohydrate metabolism; tricarboxylic acid cycle; oxaloacetate from (S)-malate (quinone route): step 1/1. In Prochlorococcus marinus (strain MIT 9313), this protein is Probable malate:quinone oxidoreductase.